Here is a 382-residue protein sequence, read N- to C-terminus: Calcium/calmodulin-dependent protein kinase (382 aa).

The 256-residue stretch at 23–278 (YKFGRTLGAG…SKEALGHIWL (256 aa)) folds into the Protein kinase domain. Residues 29–37 (LGAGTYGVV) and Lys50 each bind ATP. Asp142 (proton acceptor) is an active-site residue. Residues 291 to 301 (ELEAYRRRARL) are calmodulin-binding. 2 disordered regions span residues 318 to 344 (KEHE…GDGS) and 359 to 382 (QKQE…FSNA).

This sequence belongs to the protein kinase superfamily. CAMK Ser/Thr protein kinase family. CaMK subfamily.

It carries out the reaction L-seryl-[protein] + ATP = O-phospho-L-seryl-[protein] + ADP + H(+). The catalysed reaction is L-threonyl-[protein] + ATP = O-phospho-L-threonyl-[protein] + ADP + H(+). This chain is Calcium/calmodulin-dependent protein kinase, found in Metarhizium anisopliae (Entomophthora anisopliae).